Consider the following 569-residue polypeptide: Putative diguanylate cyclase DgcQ (569 aa).

Transmembrane regions (helical) follow at residues L25 to L45 and I365 to I385. A GGDEF domain is found at H433–N568. Mg(2+) is bound at residue D441. Residues N449, H454, and D458 each contribute to the substrate site. E484 lines the Mg(2+) pocket. E484 functions as the Proton acceptor in the catalytic mechanism.

As to quaternary structure, homodimer. Mg(2+) serves as cofactor.

It is found in the cell inner membrane. It catalyses the reaction 2 GTP = 3',3'-c-di-GMP + 2 diphosphate. It participates in glycan metabolism; bacterial cellulose biosynthesis. Its pathway is purine metabolism; 3',5'-cyclic di-GMP biosynthesis. Catalyzes the synthesis of cyclic-di-GMP (c-di-GMP) via the condensation of 2 GTP molecules. Cyclic-di-GMP is a second messenger which controls cell surface-associated traits in bacteria. Involved in the regulation of cellulose production. This is Putative diguanylate cyclase DgcQ from Shigella flexneri.